We begin with the raw amino-acid sequence, 199 residues long: Probable GTP-binding protein EngB (199 aa).

The region spanning 28 to 199 (DLPEIALAGR…ESWDTILEYL (172 aa)) is the EngB-type G domain. GTP contacts are provided by residues 36-43 (GRSNVGKS), 63-67 (GKTQL), 81-84 (DVPG), 148-151 (TKAD), and 180-182 (FSS). Residues Ser-43 and Thr-65 each coordinate Mg(2+).

The protein belongs to the TRAFAC class TrmE-Era-EngA-EngB-Septin-like GTPase superfamily. EngB GTPase family. Requires Mg(2+) as cofactor.

Its function is as follows. Necessary for normal cell division and for the maintenance of normal septation. The sequence is that of Probable GTP-binding protein EngB from Streptococcus equi subsp. equi (strain 4047).